The sequence spans 161 residues: Allophycocyanin alpha subunit (161 aa).

C81 provides a ligand contact to (2R,3E)-phycocyanobilin.

The protein belongs to the phycobiliprotein family. In terms of assembly, heterodimer of an alpha and a beta chain. Post-translationally, contains one covalently linked phycocyanobilin chromophore. The chromophore on position 81 is added by the phycocyanobilin lyase CpcUS.

The protein resides in the cellular thylakoid membrane. In terms of biological role, light-harvesting photosynthetic bile pigment-protein from the phycobiliprotein complex. Allophycocyanin has a maximum absorption at approximately 650 nanometers. The sequence is that of Allophycocyanin alpha subunit (apcA) from Picosynechococcus sp. (strain ATCC 27264 / PCC 7002 / PR-6) (Agmenellum quadruplicatum).